Here is a 787-residue protein sequence, read N- to C-terminus: Disintegrin and metalloproteinase domain-containing protein 32 (787 aa).

Positions 1-16 (MFRLWLLLAGLCGLLA) are cleaved as a signal peptide. Ser17 bears the Phosphoserine mark. Positions 17–174 (SRPGFQNSLL…PMDDNIFISE (158 aa)) are excised as a propeptide. N-linked (GlcNAc...) asparagine glycosylation is found at Asn39 and Asn125. Over 175–682 (KSEPAVPDLF…ERASGKTENT (508 aa)) the chain is Extracellular. The 198-residue stretch at 186 to 383 (LYLEMHIVVD…VGVKCLQNKP (198 aa)) folds into the Peptidase M12B domain. Disulfide bonds link Cys295–Cys378, Cys337–Cys362, Cys339–Cys344, and Cys450–Cys471. The Disintegrin domain maps to 391–479 (KPVCGNGRLE…ECGPDITLIN (89 aa)). N-linked (GlcNAc...) asparagine glycosylation is found at Asn465 and Asn598. Positions 622–654 (SAHVCSQQCSGHGVCDSRNKCHCSPGYKPPNCQ) constitute an EGF-like domain. Intrachain disulfides connect Cys626-Cys636, Cys630-Cys642, and Cys644-Cys653. A helical membrane pass occupies residues 683–703 (WLLGFLIALPILIVTTAIVLA). At 704–787 (RKQLKKWFAK…DSTQTQSSSN (84 aa)) the chain is on the cytoplasmic side. The disordered stretch occupies residues 715–787 (EEFPSSESKS…DSTQTQSSSN (73 aa)). The span at 728-749 (TQTYASQSSSEGSTQTYASQTR) shows a compositional bias: polar residues. Low complexity predominate over residues 771-787 (TSRSKSQDSTQTQSSSN).

In terms of tissue distribution, testis specific.

The protein resides in the membrane. May play a role in sperm development and fertilization This is a non-catalytic metalloprotease-like protein. In Homo sapiens (Human), this protein is Disintegrin and metalloproteinase domain-containing protein 32 (ADAM32).